Reading from the N-terminus, the 464-residue chain is Probable 1,4-beta-D-glucan cellobiohydrolase C (464 aa).

An N-terminal signal peptide occupies residues 1-19 (MKNFAPSLALSLLLPTVQA). In terms of domain architecture, CBM1 spans 20–55 (QQTMWGQCGGAGWSGATDCVAGGVCSTQNAYYAQCL). Intrachain disulfides connect C27/C44 and C38/C54. The tract at residues 59–102 (TTATTLSTTSKGTTTTTTSSTTSTGGGSSSTTTKTSTSAGPTVT) is thr-rich linker. Positions 65-100 (STTSKGTTTTTTSSTTSTGGGSSSTTTKTSTSAGPT) are enriched in low complexity. A disordered region spans residues 65–108 (STTSKGTTTTTTSSTTSTGGGSSSTTTKTSTSAGPTVTGSPSGN). Residues 103 to 464 (GSPSGNPFSG…QLLTNANPAF (362 aa)) are catalytic. D194 is a catalytic residue. 2 disulfide bridges follow: C195–C254 and C386–C433. The active-site Proton donor is D240. D419 functions as the Nucleophile in the catalytic mechanism.

It belongs to the glycosyl hydrolase 6 (cellulase B) family.

Its subcellular location is the secreted. The catalysed reaction is Hydrolysis of (1-&gt;4)-beta-D-glucosidic linkages in cellulose and cellotetraose, releasing cellobiose from the non-reducing ends of the chains.. The biological conversion of cellulose to glucose generally requires three types of hydrolytic enzymes: (1) Endoglucanases which cut internal beta-1,4-glucosidic bonds; (2) Exocellobiohydrolases that cut the disaccharide cellobiose from the non-reducing end of the cellulose polymer chain; (3) Beta-1,4-glucosidases which hydrolyze the cellobiose and other short cello-oligosaccharides to glucose. This Aspergillus clavatus (strain ATCC 1007 / CBS 513.65 / DSM 816 / NCTC 3887 / NRRL 1 / QM 1276 / 107) protein is Probable 1,4-beta-D-glucan cellobiohydrolase C (cbhC).